A 419-amino-acid polypeptide reads, in one-letter code: MKCLVALFLSLSLVACQYDDYDTERKNNNMLSSMNILDLLDSFGLNIKARIAHVRRVAGRIRLTLDIGLGNGDVERESEEAEGEGTDGRGGGEGEREGWGGEREGGEGEREGGEGEREGREGEREGKSSESNESPEDFIGPPVDMCAGESRRGSPSIGCIAAECCQHSFYINSLCPGSSVCCFSMDVCDRLPVPVIPPFPTDPGTLPPPPPIPDSQTTVSPNQPSSYMCHGDFMKLMPKGADQRTARQDNLAYAGVRASNKLVDNDLAELNKRKDCYVQAGKNHCIHPAVIAAIASRETRGGKLLYSTNGYGDGGRAYGIMQCDGGASGLGDICKKYPWDSCEHINQLTDIILLNYVNQMKTKHPSWPAHYQLKGGVSAYNAGVGNVQTIAGMDAGTTNDDYSNDVIARAQRLVNAHGW.

Residues 1–16 (MKCLVALFLSLSLVAC) form the signal peptide. The interval 74-152 (VERESEEAEG…VDMCAGESRR (79 aa)) is disordered. The segment covering 76–85 (RESEEAEGEG) has biased composition (acidic residues). The segment covering 86–130 (TDGRGGGEGEREGWGGEREGGEGEREGGEGEREGREGEREGKSSE) has biased composition (basic and acidic residues).

In the C-terminal section; belongs to the glycosyl hydrolase 23 family. In terms of tissue distribution, component of the acid-insoluble organic matrix of calcified layers of the shell (at protein level).

It is found in the secreted. The sequence is that of Glycine, glutamate and proline-rich protein from Lottia gigantea (Giant owl limpet).